Here is a 449-residue protein sequence, read N- to C-terminus: Putative F-box/LRR-repeat protein 23 (449 aa).

LRR repeat units follow at residues 14 to 37 (KLWRYDDEPLAIAETMPELRHLKL) and 39 to 64 (GNGLTNLRLEAILDNCVHLVHLDLRR). Residues 178–225 (LRNWAELPSKLTSSILLRLGAIEILQNAQKVCKPWHRVCKDPSMWRKI) enclose the F-box domain. LRR repeat units follow at residues 261–286 (WYYGTNDLIMYIADRSSNLKSLGLVR), 287–311 (CFPITDEGVAKAVSKVPLLEYLEVS), 312–337 (YCLFSGESLRDIGRSCPNLKTLKLNR), 344–367 (SNSGFDDNAKAIAESMPELRHLQL), 369–394 (GNGLTNKGLNAILDGCPHLEHLDLRQ), and 401–427 (VGDLKKRCFERIKDLRCPNDSDDDSDD).

This Arabidopsis thaliana (Mouse-ear cress) protein is Putative F-box/LRR-repeat protein 23 (FBL23).